The chain runs to 446 residues: ATP-dependent protease ATPase subunit HslU (446 aa).

ATP-binding positions include isoleucine 18, 60 to 65 (GVGKTE), aspartate 259, glutamate 324, and arginine 396.

This sequence belongs to the ClpX chaperone family. HslU subfamily. As to quaternary structure, a double ring-shaped homohexamer of HslV is capped on each side by a ring-shaped HslU homohexamer. The assembly of the HslU/HslV complex is dependent on binding of ATP.

It is found in the cytoplasm. Its function is as follows. ATPase subunit of a proteasome-like degradation complex; this subunit has chaperone activity. The binding of ATP and its subsequent hydrolysis by HslU are essential for unfolding of protein substrates subsequently hydrolyzed by HslV. HslU recognizes the N-terminal part of its protein substrates and unfolds these before they are guided to HslV for hydrolysis. This is ATP-dependent protease ATPase subunit HslU from Vibrio atlanticus (strain LGP32) (Vibrio splendidus (strain Mel32)).